We begin with the raw amino-acid sequence, 474 residues long: Synaptotagmin-17 (474 aa).

Residues 60–112 form a disordered region; that stretch reads WLMASRSSDKDGDSVHTASEVPLTPRTNSPDGRRSSSDTSKSTYSLTRRISSL. The segment covering 96–112 has biased composition (low complexity); the sequence is SDTSKSTYSLTRRISSL. 2 positions are modified to phosphoserine: Ser-118 and Ser-119. C2 domains lie at 184 to 310 and 321 to 455; these read QLGM…HWWK and ELGE…EQWH.

This sequence belongs to the synaptotagmin family.

The protein localises to the membrane. In terms of biological role, plays a role in dendrite formation by melanocytes. In Pongo abelii (Sumatran orangutan), this protein is Synaptotagmin-17 (SYT17).